We begin with the raw amino-acid sequence, 484 residues long: 3-isopropylmalate dehydratase large subunit (484 aa).

Residues Cys-352, Cys-412, and Cys-415 each contribute to the [4Fe-4S] cluster site. A disordered region spans residues 462-484 (GTLSSPSDLDPAPESAAVSSSAA).

This sequence belongs to the aconitase/IPM isomerase family. LeuC type 1 subfamily. Heterodimer of LeuC and LeuD. The cofactor is [4Fe-4S] cluster.

It carries out the reaction (2R,3S)-3-isopropylmalate = (2S)-2-isopropylmalate. Its pathway is amino-acid biosynthesis; L-leucine biosynthesis; L-leucine from 3-methyl-2-oxobutanoate: step 2/4. Functionally, catalyzes the isomerization between 2-isopropylmalate and 3-isopropylmalate, via the formation of 2-isopropylmaleate. The sequence is that of 3-isopropylmalate dehydratase large subunit from Arthrobacter sp. (strain FB24).